The chain runs to 511 residues: MDIISGQALFLLFCFISSCFLISTTARSRRSSGRAATLPPGPPRLPIIGNIHQVGKNPHSSFADLAKIYGPIMSLKFGCLNSVVITSPEAAREVLRTHDQILSGRKSNDSIRCFGHEEVSVIWLPPSSARWRMLRKLSVTLMFSPQRTEATKALRMKKVQELVSFMNESSERKEAVDISRASYTTVLNIISNILFSVDLGSYDSKKSNEFQDTVIGAMEAAGKPDAANYFPFMGFLDLQGNRKAMRGLTERLFRVFRGFMDAKIAEKSLGNYSKDVSNRDFLDSLLILNEGDEAELDNNDIEHLLLDMFTAGTDTSSSTLEWAMAELLRNPKTMVKAQAEMDRVLGQNSVVQESDISGLPYLQAVVKETFRLHPAAPLLVPRKAESDVEVLGFMVPKDTQVLVNVWAIGRDPSVWENPSQFEPERFMGKDIDVKGRDYELTPFGGGRRICPGLPLAVKTVSLMLASLLYSFDWKLPNGVVSEDLDMDETFGITLHRTNTLYAIPVKKQTIN.

A helical membrane pass occupies residues 3–23; sequence IISGQALFLLFCFISSCFLIS. Cys-450 contacts heme.

This sequence belongs to the cytochrome P450 family. Requires heme as cofactor.

Its subcellular location is the membrane. The sequence is that of Cytochrome P450 76C4 (CYP76C4) from Arabidopsis thaliana (Mouse-ear cress).